The following is a 340-amino-acid chain: Ferrochelatase (340 aa).

Positions 189 and 292 each coordinate Fe cation.

The protein belongs to the ferrochelatase family.

It localises to the cytoplasm. The enzyme catalyses heme b + 2 H(+) = protoporphyrin IX + Fe(2+). It functions in the pathway porphyrin-containing compound metabolism; protoheme biosynthesis; protoheme from protoporphyrin-IX: step 1/1. Functionally, catalyzes the ferrous insertion into protoporphyrin IX. The chain is Ferrochelatase from Ectopseudomonas mendocina (strain ymp) (Pseudomonas mendocina).